We begin with the raw amino-acid sequence, 422 residues long: Anhydromevalonate phosphate decarboxylase (422 aa).

Residues Asn-134 and Glu-197 each coordinate Mn(2+). Asp-244 serves as the catalytic Proton acceptor.

This sequence belongs to the UbiD family. Prenylated FMN is required as a cofactor. Requires Mn(2+) as cofactor.

The catalysed reaction is (2E)-3-methyl-5-phosphooxypent-2-enoate + H(+) = isopentenyl phosphate + CO2. It participates in isoprenoid biosynthesis; isopentenyl diphosphate biosynthesis via mevalonate pathway. Its function is as follows. Catalyzes the conversion of trans-anhydromevalonate 5-phosphate (tAHMP) into isopentenyl phosphate. Involved in the archaeal mevalonate (MVA) pathway, which provides fundamental precursors for isoprenoid biosynthesis, such as isopentenyl diphosphate (IPP) and dimethylallyl diphosphate (DMAPP). This is Anhydromevalonate phosphate decarboxylase from Methanosarcina mazei (strain ATCC BAA-159 / DSM 3647 / Goe1 / Go1 / JCM 11833 / OCM 88) (Methanosarcina frisia).